Consider the following 386-residue polypeptide: 5-hydroxytryptamine receptor 1B (386 aa).

The segment at 1–25 (MEEPGARCAPPPPAGSQTQTPSSNL) is disordered. Residues 1–42 (MEEPGARCAPPPPAGSQTQTPSSNLSHNCSADSYIYQDSIAL) lie on the Extracellular side of the membrane. A compositionally biased stretch (polar residues) spans 16-25 (SQTQTPSSNL). N-linked (GlcNAc...) asparagine glycosylation is found at Asn-24 and Asn-28. A helical membrane pass occupies residues 43–68 (PWKVLLVALLALITLATTLSNAFVIA). Topologically, residues 69–82 (TVYRTRKLHTPANY) are cytoplasmic. A helical transmembrane segment spans residues 83–107 (LIASLAVTDLLVSILVMPISTMYTV). At 108-115 (TGRWTLGQ) the chain is on the extracellular side. The chain crosses the membrane as a helical span at residues 116–141 (VVCDFWLSSDITCCTASIMHLCVIAL). A disulfide bond links Cys-118 and Cys-195. Ergotamine-binding residues include Asp-125 and Thr-130. The DRY motif; important for ligand-induced conformation changes and signaling motif lies at 142-144 (DRY). The Cytoplasmic segment spans residues 142-161 (DRYWAITDAVEYSAKRTPRR). Residues 162–180 (AAVMIALVWVFSISISLPR) traverse the membrane as a helical segment. Residues 181-201 (FFWRQAKAEEEVLDCLVNTDH) lie on the Extracellular side of the membrane. Ergotamine is bound at residue Val-197. Residues 202–225 (VLYTVYSTVGAFYLPTLLLIALYG) form a helical membrane-spanning segment. The Cytoplasmic segment spans residues 226-311 (RIYVEARSRI…AARERKATKT (86 aa)). The segment at 253–272 (ISDSPGSTSSVTSINSRVPD) is disordered. Positions 254–268 (SDSPGSTSSVTSINS) are enriched in low complexity. A helical transmembrane segment spans residues 312-333 (LGIILGAFIVCWLPFFIISLVM). Residues 334 to 343 (PICKDACWFH) are Extracellular-facing. A helical transmembrane segment spans residues 344 to 366 (MAIFDFFNWLGYLNSLINPIIYT). Residues 361–365 (NPIIY) carry the NPxxY motif; important for ligand-induced conformation changes and signaling motif. The Cytoplasmic portion of the chain corresponds to 367–386 (MPNEDFKQAFHKLIRFKCTG). A lipid anchor (S-palmitoyl cysteine) is attached at Cys-384.

The protein belongs to the G-protein coupled receptor 1 family. As to quaternary structure, homodimer. Heterodimer with HTR1D. In terms of processing, phosphorylated. Desensitization of the receptor may be mediated by its phosphorylation. Palmitoylated.

It is found in the cell membrane. In terms of biological role, G-protein coupled receptor for 5-hydroxytryptamine (serotonin). Also functions as a receptor for ergot alkaloid derivatives, various anxiolytic and antidepressant drugs and other psychoactive substances, such as lysergic acid diethylamide (LSD). Ligand binding causes a conformation change that triggers signaling via guanine nucleotide-binding proteins (G proteins) and modulates the activity of downstream effectors, such as adenylate cyclase. HTR1B is coupled to G(i)/G(o) G alpha proteins and mediates inhibitory neurotransmission by inhibiting adenylate cyclase activity. Arrestin family members inhibit signaling via G proteins and mediate activation of alternative signaling pathways. Regulates the release of 5-hydroxytryptamine, dopamine and acetylcholine in the brain, and thereby affects neural activity, nociceptive processing, pain perception, mood and behavior. Besides, plays a role in vasoconstriction of cerebral arteries. The protein is 5-hydroxytryptamine receptor 1B (HTR1B) of Spalax ehrenbergi (Middle East blind mole rat).